We begin with the raw amino-acid sequence, 94 residues long: Co-chaperonin GroES (94 aa).

The protein belongs to the GroES chaperonin family. As to quaternary structure, heptamer of 7 subunits arranged in a ring. Interacts with the chaperonin GroEL.

It is found in the cytoplasm. Functionally, together with the chaperonin GroEL, plays an essential role in assisting protein folding. The GroEL-GroES system forms a nano-cage that allows encapsulation of the non-native substrate proteins and provides a physical environment optimized to promote and accelerate protein folding. GroES binds to the apical surface of the GroEL ring, thereby capping the opening of the GroEL channel. This chain is Co-chaperonin GroES, found in Clostridium perfringens (strain ATCC 13124 / DSM 756 / JCM 1290 / NCIMB 6125 / NCTC 8237 / Type A).